A 661-amino-acid chain; its full sequence is UvrABC system protein B (661 aa).

One can recognise a Helicase ATP-binding domain in the interval K26–R413. G39 to T46 lines the ATP pocket. The Beta-hairpin motif lies at Y92 to I115. One can recognise a Helicase C-terminal domain in the interval Q430–I596. The region spanning Q625 to E660 is the UVR domain.

This sequence belongs to the UvrB family. As to quaternary structure, forms a heterotetramer with UvrA during the search for lesions. Interacts with UvrC in an incision complex.

It is found in the cytoplasm. Its function is as follows. The UvrABC repair system catalyzes the recognition and processing of DNA lesions. A damage recognition complex composed of 2 UvrA and 2 UvrB subunits scans DNA for abnormalities. Upon binding of the UvrA(2)B(2) complex to a putative damaged site, the DNA wraps around one UvrB monomer. DNA wrap is dependent on ATP binding by UvrB and probably causes local melting of the DNA helix, facilitating insertion of UvrB beta-hairpin between the DNA strands. Then UvrB probes one DNA strand for the presence of a lesion. If a lesion is found the UvrA subunits dissociate and the UvrB-DNA preincision complex is formed. This complex is subsequently bound by UvrC and the second UvrB is released. If no lesion is found, the DNA wraps around the other UvrB subunit that will check the other stand for damage. The protein is UvrABC system protein B of Bacillus subtilis (strain 168).